The sequence spans 212 residues: Ribonuclease HII (212 aa).

In terms of domain architecture, RNase H type-2 spans 4–206 (EVQCGIDEAG…YKKIKEDVES (203 aa)). 3 residues coordinate a divalent metal cation: Asp-10, Glu-11, and Asp-103.

This sequence belongs to the RNase HII family. The cofactor is Mn(2+). It depends on Mg(2+) as a cofactor.

The protein resides in the cytoplasm. It carries out the reaction Endonucleolytic cleavage to 5'-phosphomonoester.. Functionally, endonuclease that specifically degrades the RNA of RNA-DNA hybrids. The polypeptide is Ribonuclease HII (Thermoplasma volcanium (strain ATCC 51530 / DSM 4299 / JCM 9571 / NBRC 15438 / GSS1)).